We begin with the raw amino-acid sequence, 437 residues long: Eukaryotic peptide chain release factor subunit 1 (437 aa).

Ala-2 is modified (N-acetylalanine). An NIKS motif; plays an important role in translational termination motif is present at residues 61-64 (NIKS). Lys-63 bears the 4-hydroxylysine mark. Residue Lys-87 forms a Glycyl lysine isopeptide (Lys-Gly) (interchain with G-Cter in SUMO2) linkage. Gln-185 carries the N5-methylglutamine modification. Residue Lys-279 forms a Glycyl lysine isopeptide (Lys-Gly) (interchain with G-Cter in ubiquitin) linkage. Phosphothreonine is present on Thr-347. Lys-404 is covalently cross-linked (Glycyl lysine isopeptide (Lys-Gly) (interchain with G-Cter in SUMO2)).

It belongs to the eukaryotic release factor 1 family. In terms of assembly, component of the eRF1-eRF3-GTP ternary complex, composed of ETF1/ERF1 and eRF3 (GSPT1/ERF3A or GSPT2/ERF3B) and GTP. Component of the transient SURF (SMG1-UPF1-eRF1-eRF3) complex. Interacts with JMJD4. The ETF1-GSPT1 complex interacts with JMJD4. In terms of processing, hydroxylation at Lys-63 by JMJD4 promotes its translational termination efficiency. Methylated at Gln-185 by N6AMT1. Post-translationally, ubiquitinated at Lys-279 via 'Lys-6'-linked polyubiquitin chains by RNF14 and RNF25 in response to ribosome collisions (ribosome stalling), leading to its degradation by the proteasome and rescue of stalled ribosomes.

Its subcellular location is the cytoplasm. Component of the eRF1-eRF3-GTP ternary complex, a ternary complex that mediates translation termination in response to the termination codons. The eRF1-eRF3-GTP complex binds to a stop codon in the ribosomal A-site. ETF1/ERF1 is responsible for stop codon recognition and inducing hydrolysis of peptidyl-tRNA. Following GTP hydrolysis, eRF3 (GSPT1/ERF3A or GSPT2/ERF3B) dissociates, permitting ETF1/eRF1 to accommodate fully in the A-site, followed by hydrolysis of peptidyl-tRNA. Component of the transient SURF complex which recruits UPF1 to stalled ribosomes in the context of nonsense-mediated decay (NMD) of mRNAs containing premature stop codons. Required for SHFL-mediated translation termination which inhibits programmed ribosomal frameshifting (-1PRF) of mRNA from viruses and cellular genes. The protein is Eukaryotic peptide chain release factor subunit 1 (ETF1) of Bos taurus (Bovine).